Here is a 1366-residue protein sequence, read N- to C-terminus: DNA-directed RNA polymerase subunit beta (1366 aa).

The protein belongs to the RNA polymerase beta chain family. As to quaternary structure, the RNAP catalytic core consists of 2 alpha, 1 beta, 1 beta' and 1 omega subunit. When a sigma factor is associated with the core the holoenzyme is formed, which can initiate transcription.

It catalyses the reaction RNA(n) + a ribonucleoside 5'-triphosphate = RNA(n+1) + diphosphate. DNA-dependent RNA polymerase catalyzes the transcription of DNA into RNA using the four ribonucleoside triphosphates as substrates. The polypeptide is DNA-directed RNA polymerase subunit beta (Polynucleobacter asymbioticus (strain DSM 18221 / CIP 109841 / QLW-P1DMWA-1) (Polynucleobacter necessarius subsp. asymbioticus)).